A 306-amino-acid chain; its full sequence is Follistatin-related protein 1 (306 aa).

Positions 1-18 (MWKRWLALALVAVAWVRA) are cleaved as a signal peptide. Residues 28–51 (ICANVFCGAGRECAVTEKGEPTCL) enclose the Follistatin-like domain. 5 disulfide bridges follow: Cys29–Cys40, Cys34–Cys50, Cys52–Cys82, Cys56–Cys75, and Cys64–Cys96. Residues 46–98 (GEPTCLCIEQCKPHKRPVCGSNGKTYLNHCELHRDACLTGSKIQVDYDGHCKE) enclose the Kazal-like domain. N-linked (GlcNAc...) asparagine glycosylation is present at Asn142. The region spanning 142 to 176 (NYSEILDKYFKNFDNGDSRLDSSEFLKFVEQNETA) is the EF-hand 1 domain. Ser163 is modified (phosphoserine). N-linked (GlcNAc...) asparagine glycans are attached at residues Asn173 and Asn178. The 36-residue stretch at 191–226 (LRGLCVDALIELSDENADWKLSFQEFLKCLNPSFNP) folds into the EF-hand 2 domain. Residues 231–285 (CALEDETYADGAETEVDCNRCVCACGNWVCTAMTCDGKNQKGAQTQTEEEMTRYV) form the VWFC domain.

In terms of assembly, homodimer. Interacts with SCN10A. Interacts with DIP2A; DIP2A may act as a cell surface receptor for FSTL1. Interacts with BMP4. Interacts with CD14; this interaction promotes TL4-mediated signaling cascade.

It is found in the secreted. Functionally, secreted glycoprotein that is involved in various physiological processes, such as angiogenesis, regulation of the immune response, cell proliferation and differentiation. Plays a role in the development of the central nervous system, skeletal system, lungs, and ureter. Promotes endothelial cell survival, migration and differentiation into network structures in an AKT-dependent manner. Also promotes survival of cardiac myocytes. Initiates various signaling cascades by activating different receptors on the cell surface such as DIP2A, TLR4 or BMP receptors. The polypeptide is Follistatin-related protein 1 (FSTL1) (Pongo abelii (Sumatran orangutan)).